The primary structure comprises 335 residues: RNA polymerase sigma factor RpoS (335 aa).

Residues 57 to 90 form a sigma-70 factor domain-1 region; sequence DATQMYLSEIGFSPLLTAEEEVLYARRALRGDEA. The segment at 95–165 is sigma-70 factor domain-2; sequence MIESNLRLVV…ERALMNQTRT (71 aa). Residues 119-122 carry the Interaction with polymerase core subunit RpoC motif; sequence DLIE. The tract at residues 175-250 is sigma-70 factor domain-3; the sequence is ELNIYLRTAR…DSHNADPEFS (76 aa). The sigma-70 factor domain-4 stretch occupies residues 263 to 316; it reads WLDELNPKQKEVLARRFGLLGYEPSTLEEVGREINLTRERVRQIQVEGLRRLRE. The segment at residues 289–308 is a DNA-binding region (H-T-H motif); it reads LEEVGREINLTRERVRQIQV.

Belongs to the sigma-70 factor family. RpoS subfamily. Interacts with the RNA polymerase core enzyme.

Its subcellular location is the cytoplasm. Sigma factors are initiation factors that promote the attachment of RNA polymerase to specific initiation sites and are then released. This sigma factor is the master transcriptional regulator of the stationary phase and the general stress response. May be required for the persistence of V.cholerae in aquatic habitats. This chain is RNA polymerase sigma factor RpoS, found in Vibrio cholerae serotype O1 (strain ATCC 39315 / El Tor Inaba N16961).